The sequence spans 275 residues: Large ribosomal subunit protein uL2c (275 aa).

Disordered regions lie at residues 1-30 (MAIH…QKQK) and 225-275 (MNPV…RRRK). The span at 21 to 30 (QAKSTPQKQK) shows a compositional bias: polar residues.

This sequence belongs to the universal ribosomal protein uL2 family. In terms of assembly, part of the 50S ribosomal subunit.

Its subcellular location is the plastid. It is found in the chloroplast. This Illicium oligandrum (Star anise) protein is Large ribosomal subunit protein uL2c (rpl2).